The primary structure comprises 274 residues: Thiamine kinase (274 aa).

Belongs to the thiamine kinase family.

It carries out the reaction thiamine + ATP = thiamine phosphate + ADP + H(+). It participates in cofactor biosynthesis; thiamine diphosphate biosynthesis; thiamine phosphate from thiamine: step 1/1. Functionally, catalyzes the ATP-dependent phosphorylation of thiamine to thiamine phosphate. Is involved in thiamine salvage. This is Thiamine kinase from Salmonella heidelberg (strain SL476).